The chain runs to 185 residues: Ribosome-recycling factor (185 aa).

The protein belongs to the RRF family.

The protein localises to the cytoplasm. Functionally, responsible for the release of ribosomes from messenger RNA at the termination of protein biosynthesis. May increase the efficiency of translation by recycling ribosomes from one round of translation to another. This is Ribosome-recycling factor from Thermosipho africanus (strain TCF52B).